The following is a 364-amino-acid chain: 3-isopropylmalate dehydrogenase (364 aa).

78–91 (GKKWDNFPIEERPE) provides a ligand contact to NAD(+). Substrate-binding residues include arginine 99, arginine 109, arginine 138, and aspartate 228. The Mg(2+) site is built by aspartate 228, aspartate 252, and aspartate 256. Residue 286 to 298 (GSAPDIAGKNIAN) coordinates NAD(+).

It belongs to the isocitrate and isopropylmalate dehydrogenases family. LeuB type 1 subfamily. In terms of assembly, homodimer. Mg(2+) serves as cofactor. Requires Mn(2+) as cofactor.

It localises to the cytoplasm. It carries out the reaction (2R,3S)-3-isopropylmalate + NAD(+) = 4-methyl-2-oxopentanoate + CO2 + NADH. The protein operates within amino-acid biosynthesis; L-leucine biosynthesis; L-leucine from 3-methyl-2-oxobutanoate: step 3/4. Its function is as follows. Catalyzes the oxidation of 3-carboxy-2-hydroxy-4-methylpentanoate (3-isopropylmalate) to 3-carboxy-4-methyl-2-oxopentanoate. The product decarboxylates to 4-methyl-2 oxopentanoate. This chain is 3-isopropylmalate dehydrogenase, found in Buchnera aphidicola subsp. Uroleucon obscurum.